Consider the following 206-residue polypeptide: Recombination protein RecR (206 aa).

The C4-type zinc-finger motif lies at 60 to 75; that stretch reads CARCNTFCEGGLCDIC. One can recognise a Toprim domain in the interval 83 to 178; it reads RRLMVVHMPA…KVSRLSQGIP (96 aa).

It belongs to the RecR family.

In terms of biological role, may play a role in DNA repair. It seems to be involved in an RecBC-independent recombinational process of DNA repair. It may act with RecF and RecO. This Neisseria gonorrhoeae (strain NCCP11945) protein is Recombination protein RecR.